The chain runs to 46 residues: MQEQKFRILTINPGSTSTKIGVFENERAIVEKTIRHEGRCFGNIKR.

The protein belongs to the acetokinase family.

It is found in the cytoplasm. The enzyme catalyses butanoate + ATP = butanoyl phosphate + ADP. The chain is Probable butyrate kinase (buk) from Geobacillus stearothermophilus (Bacillus stearothermophilus).